Consider the following 306-residue polypeptide: Ribonuclease Z (306 aa).

Residues His-63, His-65, Asp-67, His-68, His-141, Asp-211, and His-269 each coordinate Zn(2+). Catalysis depends on Asp-67, which acts as the Proton acceptor.

Belongs to the RNase Z family. In terms of assembly, homodimer. Zn(2+) is required as a cofactor.

It carries out the reaction Endonucleolytic cleavage of RNA, removing extra 3' nucleotides from tRNA precursor, generating 3' termini of tRNAs. A 3'-hydroxy group is left at the tRNA terminus and a 5'-phosphoryl group is left at the trailer molecule.. Functionally, zinc phosphodiesterase, which displays some tRNA 3'-processing endonuclease activity. Probably involved in tRNA maturation, by removing a 3'-trailer from precursor tRNA. This Staphylococcus epidermidis (strain ATCC 35984 / DSM 28319 / BCRC 17069 / CCUG 31568 / BM 3577 / RP62A) protein is Ribonuclease Z.